Consider the following 554-residue polypeptide: Hyaluronan synthase 3 (554 aa).

The Cytoplasmic portion of the chain corresponds to 1–15 (MPVQLTTALRVVGTS). The chain crosses the membrane as a helical span at residues 16-36 (LFALVVLGGILAAYVTGYQFI). Topologically, residues 37-44 (HTEKHYLS) are extracellular. The helical transmembrane segment at 45–65 (FGLYGAILGLHLLIQSLFAFL) threads the bilayer. Residues 66-378 (EHRRMRRAGR…NSLWFHKHHL (313 aa)) are Cytoplasmic-facing. The helical transmembrane segment at 379-399 (WMTYESVVTGFFPFFLIATVI) threads the bilayer. Over 400-409 (QLFYRGRIWN) the chain is Extracellular. Residues 410 to 430 (ILLFLLTVQLVGIIKATYACF) form a helical membrane-spanning segment. Residues 431–441 (LRGNAEMIFMS) lie on the Cytoplasmic side of the membrane. A helical transmembrane segment spans residues 442–462 (LYSLLYMSSLLPAKIFAIATI). Residue N463 is glycosylated (N-linked (GlcNAc...) asparagine). Residues 463 to 474 (NKSGWGTSGRKT) lie on the Extracellular side of the membrane. The helical transmembrane segment at 475–495 (IVVNFIGLIPVSIWVAVLLGG) threads the bilayer. Residues 496 to 516 (LAYTAYCQDLFSETELAFLVS) lie on the Cytoplasmic side of the membrane. The helical transmembrane segment at 517 to 537 (GAILYGCYWVALLMLYLAIIA) threads the bilayer. Topologically, residues 538–554 (RRCGKKPEQYSLAFAEV) are extracellular.

This sequence belongs to the NodC/HAS family. The cofactor is Mg(2+). In terms of processing, O-GlcNAcylation increases the hyaluronan synthase activity, HAS3 stability and its plasma membrane residence. The concentration of UDP-GlcNAc controls the level of O-GlcNAc modification.

Its subcellular location is the cell membrane. It is found in the golgi apparatus membrane. The protein localises to the golgi apparatus. It localises to the trans-Golgi network membrane. The protein resides in the cytoplasmic vesicle. The enzyme catalyses [hyaluronan](n) + UDP-N-acetyl-alpha-D-glucosamine = N-acetyl-beta-D-glucosaminyl-(1-&gt;4)-[hyaluronan](n) + UDP + H(+). It catalyses the reaction N-acetyl-beta-D-glucosaminyl-(1-&gt;4)-[hyaluronan](n) + UDP-alpha-D-glucuronate = [hyaluronan](n+1) + UDP + H(+). It functions in the pathway glycan biosynthesis; hyaluronan biosynthesis. Its function is as follows. Catalyzes the addition of GlcNAc or GlcUA monosaccharides to the nascent hyaluronan polymer. Therefore, it is essential to hyaluronan synthesis a major component of most extracellular matrices that has a structural role in tissues architectures and regulates cell adhesion, migration and differentiation. This is one of three isoenzymes responsible for cellular hyaluronan synthesis. The polypeptide is Hyaluronan synthase 3 (Has3) (Mus musculus (Mouse)).